A 435-amino-acid chain; its full sequence is tRNA(Ile)-lysidine synthase (435 aa).

25 to 30 contributes to the ATP binding site; that stretch reads SGGLDS.

It belongs to the tRNA(Ile)-lysidine synthase family.

It is found in the cytoplasm. It catalyses the reaction cytidine(34) in tRNA(Ile2) + L-lysine + ATP = lysidine(34) in tRNA(Ile2) + AMP + diphosphate + H(+). In terms of biological role, ligates lysine onto the cytidine present at position 34 of the AUA codon-specific tRNA(Ile) that contains the anticodon CAU, in an ATP-dependent manner. Cytidine is converted to lysidine, thus changing the amino acid specificity of the tRNA from methionine to isoleucine. The chain is tRNA(Ile)-lysidine synthase from Photobacterium profundum (strain SS9).